A 1074-amino-acid polypeptide reads, in one-letter code: MERFAAVDDQYDPDAVEDGVFEYWDDVDAYEQTKAHRADGEDYFFVDGPPYTSGAAHMGTTWNKTLKDCYIRYLRMQGYNVTDRPGYDMHGLPIETKVEERLDFENKKDIEQFGEENFIEECKDFAEEQLEGLQTDFQDFGVWMDWDDPYKTVNPEYMEAAWWGFQQAHERDLVEQGQRSINQCPRCETGIANNEVEYHDVGKPSIYVKFPLAEQDGSLVIWTTTPWTIVANTFVAADGDLEYVGVDAEKDGDTERLYLAEACVEDVLKAGRYDDYEVVEELSGEEMVGWAYEHPLAEEVPDHAQGEGSGQVYTADYVEADRTGLVHSAPGHGEEDFERGQELDLEIFCPVGSDGVYTDDAGKYAGTFVRDANDEVIDDLDENGVLLSSEPGHTVREGQCWRCDTDIVRIVTDQWFITVTDIKDELLANIEDSEWYPQWARDNRFRDFVEDAPDWNVSRQRYWGIPIPIWLPEDWSGDMDDAIVVGDREELAERVDQDIDPENVDLHKGTVDDLTITEDSTTYTRVGDVFDVWLDSSVATWGTVNYPEQTEDFEELWPADLIMEAHDQTRGWFWSQLGMSTAATGEIPYKQVLMHGYANMPDGRGMSKSKGVLIDPHEVIEKHGRDPMRLFLLSVTAQGEDMNFSWEETAEMQRRLNILWNVARFPLPYMRADDFDPEETTVEDLRDDLELVDEWVLSRLQSVTEAMTDSMDDFENDKAVDELLEFVVEDVSRFYIQVVRERMWEEEDSASKQAAYATLYRVLESVAALFAPFTPFVAEQVYGALTGDAGHPTVHMCDWPEVDADLHDPALEREIEVVREVEEAGSNARQQAERKLRWPVTRVVVDVDSDDVADAVRAQEAIIADRLNARAVEVVGADDEWGELQYSAEADMSELGPAFGDDAGRVMNALNEARVTEQSLDTLEGTVREALGEDVDLTEEMVEFRRETPEGVTGTEFTALDGGGVVYVDTALTEDIESEGYAREVIRRIQEMRKDLELDIEERIAVDLTIDDERVDSLVREHEALIKEEVRADELDGVEDGHRKTWEVEGTDMEIAIAPCEADQREASEQASGD.

The 'HIGH' region signature appears at P50 to T60. The short motif at G605 to S609 is the 'KMSKS' region element. K608 contacts ATP.

It belongs to the class-I aminoacyl-tRNA synthetase family. IleS type 2 subfamily. In terms of assembly, monomer. The cofactor is Zn(2+).

Its subcellular location is the cytoplasm. It carries out the reaction tRNA(Ile) + L-isoleucine + ATP = L-isoleucyl-tRNA(Ile) + AMP + diphosphate. In terms of biological role, catalyzes the attachment of isoleucine to tRNA(Ile). As IleRS can inadvertently accommodate and process structurally similar amino acids such as valine, to avoid such errors it has two additional distinct tRNA(Ile)-dependent editing activities. One activity is designated as 'pretransfer' editing and involves the hydrolysis of activated Val-AMP. The other activity is designated 'posttransfer' editing and involves deacylation of mischarged Val-tRNA(Ile). This Haloarcula marismortui (strain ATCC 43049 / DSM 3752 / JCM 8966 / VKM B-1809) (Halobacterium marismortui) protein is Isoleucine--tRNA ligase.